Reading from the N-terminus, the 479-residue chain is MVGGKWRFLEVAVVVMVLQWSCDYNGNLAEGFPVQDLVTKLPGQPEVAFRQFAGYVDIDVKAGRSLFYYFVEAEKQPHSKPLTLWLNGGPGCSSIGGGAFTELGPFYPTGDARGLRRNPKSWNKASNLLFVDSPAGVGWSYSNTTSDYTTGDESTAKDMLVFMLRWLEKFPQFKTRNLFLAGESYAGHYVPQLADVILEYNAQRSNRFKFNLKGIAIGNPLLKLDRDVPAIYEFFWSHGMISDELGLTIMNQCDFEDYTFTDSHNISKLCEAAVNQAGTIITQYVNYYDILLDVCYPSLFEQELRLKKMGTRMSFGVDVCMSFEEQLYLNLPEVQKALHANRTKLPYEWSMCSSLLNYKYTDGNANMLPILKRIVKSKVPVWVFSGDEDSVIPLLGSRTLVKELADDLNFNTTVPYGAWFDKGQVGGWVVEYGNLLTFATVRGAAHMVPYSQPSRALHLFTSFVLGRKLPHKSPPALHD.

Positions 1–22 (MVGGKWRFLEVAVVVMVLQWSC) are cleaved as a signal peptide. Disulfide bonds link C92-C352, C253-C270, and C295-C320. The N-linked (GlcNAc...) asparagine glycan is linked to N143. The active site involves S184. Residue N265 is glycosylated (N-linked (GlcNAc...) asparagine). Residue N341 is glycosylated (N-linked (GlcNAc...) asparagine). Residue D389 is part of the active site. Residue N411 is glycosylated (N-linked (GlcNAc...) asparagine). Residue H446 is part of the active site.

Belongs to the peptidase S10 family. Expressed in seedlings.

The protein resides in the secreted. In terms of biological role, probable carboxypeptidase. The sequence is that of Serine carboxypeptidase-like 44 (SCPL44) from Arabidopsis thaliana (Mouse-ear cress).